Here is a 424-residue protein sequence, read N- to C-terminus: L-glutamine:2-deoxy-scyllo-inosose aminotransferase (424 aa).

K202 bears the N6-(pyridoxal phosphate)lysine mark.

Belongs to the DegT/DnrJ/EryC1 family. L-glutamine:2-deoxy-scyllo-inosose/scyllo-inosose aminotransferase subfamily. Requires pyridoxal 5'-phosphate as cofactor.

It carries out the reaction 2-deoxy-L-scyllo-inosose + L-glutamine = 2-deoxy-scyllo-inosamine + 2-oxoglutaramate. It catalyses the reaction 3-amino-2,3-dideoxy-scyllo-inosose + L-glutamine = 2-deoxystreptamine + 2-oxoglutaramate. It functions in the pathway metabolic intermediate biosynthesis; 2-deoxystreptamine biosynthesis; 2-deoxystreptamine from D-glucose 6-phosphate: step 2/4. Its pathway is metabolic intermediate biosynthesis; 2-deoxystreptamine biosynthesis; 2-deoxystreptamine from D-glucose 6-phosphate: step 4/4. It participates in antibiotic biosynthesis; ribostamycin biosynthesis. In terms of biological role, catalyzes the PLP-dependent transamination of 2-deoxy-scyllo-inosose (2-DOI) to form 2-deoxy-scyllo-inosamine (2-DOIA) using L-glutamine as the amino donor. Also catalyzes the transamination of 3-amino-2,3-dideoxy-scyllo-inosose (keto-2-DOIA) into 2-deoxystreptamine (2-DOS). This chain is L-glutamine:2-deoxy-scyllo-inosose aminotransferase (rbmB), found in Streptomyces ribosidificus.